The sequence spans 287 residues: Glycine--tRNA ligase alpha subunit (287 aa).

Belongs to the class-II aminoacyl-tRNA synthetase family. Tetramer of two alpha and two beta subunits.

It localises to the cytoplasm. The catalysed reaction is tRNA(Gly) + glycine + ATP = glycyl-tRNA(Gly) + AMP + diphosphate. The chain is Glycine--tRNA ligase alpha subunit from Campylobacter jejuni subsp. jejuni serotype O:6 (strain 81116 / NCTC 11828).